The primary structure comprises 283 residues: MYSFTAYANSVIVAFHLLKFSSSENNIEISYADEDTIPEYVSIRDLNAGDKTTVELYPLVAWKVIAQEDISTGDRVSVGKNGQVKKTTDMRTTFGYAVSPAKAGQLVTVAISTVFDTIITPDDLGDVDDDVKAFLKSNTTDENKSNLRELLVADADVKALLSGSTTDANKAKLRDLLFSNLDVKAFLSGSTSEDNKVNLRNLLVSNPAILAFLNANPDTDTQTTLRTMIGAGTPYTLPAATTTTLGGVKRMPAIANSTATDVATLVKDFNNLLAALRTAGHSL.

It belongs to the phi29likevirus major capsid fiber protein family. As to quaternary structure, homotrimer. Forms a super helix coiled coil in the homotrimer.

Its subcellular location is the virion. Protein that forms the 55 capsid fibers. These fibers are not always present and may have been lost in some lab strains. They may enhance the attachment of the virions onto the host cell wall. This is Capsid fiber protein (8.5) from Bacillus subtilis (Bacteriophage B103).